The chain runs to 351 residues: Probable E3 ubiquitin-protein ligase sinah (351 aa).

Residues 1-38 are disordered; the sequence is MSVRNSRPQLSWPERVSPQRTIDTPTASGEMLTRRQSA. The segment covering 18–27 has biased composition (polar residues); it reads PQRTIDTPTA. The RING-type zinc-finger motif lies at 106-141; it reads CPVCFGYIMPPIMQCPRGHLICSTCRSKLTICPVCR. The segment at 155–346 is SBD; that stretch reads VASKLIFPCK…LALNVVIRKV (192 aa). The segment at 158–218 adopts an SIAH-type zinc-finger fold; it reads KLIFPCKHSH…VYQHLMSSHE (61 aa). Residues C163, C170, H182, C186, C193, C200, H212, and H217 each contribute to the Zn(2+) site.

The protein belongs to the SINA (Seven in absentia) family. Interacts with ebi and phyl.

The catalysed reaction is S-ubiquitinyl-[E2 ubiquitin-conjugating enzyme]-L-cysteine + [acceptor protein]-L-lysine = [E2 ubiquitin-conjugating enzyme]-L-cysteine + N(6)-ubiquitinyl-[acceptor protein]-L-lysine.. It functions in the pathway protein modification; protein ubiquitination. In terms of biological role, E3 ubiquitin-protein ligase that mediates ubiquitination and subsequent proteasomal degradation of target proteins. The adapter phyl is required to direct the degradation of the two isoforms of the transcriptional repressor Tramtrack (Ttk). E3 ubiquitin ligases accept ubiquitin from an E2 ubiquitin-conjugating enzyme in the form of a thioester and then directly transfers the ubiquitin to targeted substrates. It probably triggers the ubiquitin-mediated degradation of different substrates. A phyl-independent mechanism of degradation exists for isoform beta of ttk that involves motifs in the C-terminus of ttk. The chain is Probable E3 ubiquitin-protein ligase sinah (sinah) from Drosophila melanogaster (Fruit fly).